Reading from the N-terminus, the 383-residue chain is ATP phosphoribosyltransferase regulatory subunit (383 aa).

It belongs to the class-II aminoacyl-tRNA synthetase family. HisZ subfamily. In terms of assembly, heteromultimer composed of HisG and HisZ subunits.

The protein localises to the cytoplasm. It participates in amino-acid biosynthesis; L-histidine biosynthesis; L-histidine from 5-phospho-alpha-D-ribose 1-diphosphate: step 1/9. Functionally, required for the first step of histidine biosynthesis. May allow the feedback regulation of ATP phosphoribosyltransferase activity by histidine. The polypeptide is ATP phosphoribosyltransferase regulatory subunit (Cupriavidus metallidurans (strain ATCC 43123 / DSM 2839 / NBRC 102507 / CH34) (Ralstonia metallidurans)).